Consider the following 320-residue polypeptide: MKNLKKKLTLTGLMTAGLLFLSGCVQTHVVDGVRVPTEAATHGITYNFLVRPMSAFVDLFANNLHMGYGWGIIFVTLIIRFLILPLGLNQAYKSTYMQEKMAYLAPVFAPLQERLKKAQTPEEKMAAQQALMAAQKDNGINMLSSIGCLPMLIQWPFFIALYNAAAYTTGISSSTFYGIPLGHPSVVLVIISGVLYFIQTWISTLSMTPEQKKSGMAMLIMSPAMIVVFSFMSPAGVALYWAVGGFVIVIQQIIITFIMKPRMRRRIDEEFTKNPPKINNEGLKDVTPTSVQENFKEITSERNEKERKSGGRNAGKQNRK.

The N-terminal stretch at 1-23 is a signal peptide; it reads MKNLKKKLTLTGLMTAGLLFLSG. The N-palmitoyl cysteine moiety is linked to residue Cys24. Cys24 carries S-diacylglycerol cysteine lipidation. 5 consecutive transmembrane segments (helical) span residues 68–88, 142–162, 178–198, 217–237, and 239–259; these read YGWG…PLGL, MLSS…IALY, GIPL…LYFI, AMLI…PAGV, and LYWA…TFIM. The segment at 270–320 is disordered; it reads EFTKNPPKINNEGLKDVTPTSVQENFKEITSERNEKERKSGGRNAGKQNRK. A compositionally biased stretch (basic and acidic residues) spans 294–309; that stretch reads NFKEITSERNEKERKS.

This sequence belongs to the OXA1/ALB3/YidC family. Type 2 subfamily.

It is found in the cell membrane. Required for the insertion and/or proper folding and/or complex formation of integral membrane proteins into the membrane. Involved in integration of membrane proteins that insert both dependently and independently of the Sec translocase complex, as well as at least some lipoproteins. In Lactococcus lactis subsp. lactis (strain IL1403) (Streptococcus lactis), this protein is Membrane protein insertase YidC 2.